The sequence spans 31 residues: Ice-structuring glycoprotein 3 (31 aa).

O-linked (GalNAc...) threonine glycosylation is found at Thr3, Thr6, Thr9, Thr12, Thr15, Thr18, Thr21, Thr24, Thr27, and Thr30.

In terms of processing, O-linked glycans consist of Gal-GalNAc disaccharides. The three proteins may differ only in the number of repeating units of -Ala-Ala-Thr-.

It localises to the secreted. In terms of biological role, antifreeze proteins lower the blood freezing point. This fish lives in antarctic waters where it experiences water temperatures near -1.9 degrees Celsius. Its blood has a freezing point of about -2.0 degrees Celsius, and 30% of the freezing-point depression is due mainly to the 3 major high molecular weight glycoproteins in the plasma. The polypeptide is Ice-structuring glycoprotein 3 (Pagothenia borchgrevinki (Bald rockcod)).